The primary structure comprises 615 residues: Aldehyde oxidase GLOX1 (615 aa).

Positions 1–25 are cleaved as a signal peptide; it reads MKKSTRLLWLLSIIVLVAAVSKAVA. The N-linked (GlcNAc...) asparagine glycan is linked to Asn35. A disordered region spans residues 70–89; the sequence is PPKAGKGKGKGKGRGTVAAG. The span at 72-82 shows a compositional bias: basic residues; sequence KAGKGKGKGKG. N-linked (GlcNAc...) asparagine glycosylation is found at Asn187 and Asn297.

The protein resides in the secreted. It carries out the reaction an aldehyde + O2 + H2O = a carboxylate + H2O2 + H(+). Its function is as follows. Catalyzes the oxidation of aldehydes to the corresponding carboxylate by coupling the reaction to the reduction of dioxygen to hydrogen peroxide. Substrates include glyoxal and other aldehydes. May be regulated by the transcription factor MYB80 during anther development and play a role in tapetum and pollen development. This Arabidopsis thaliana (Mouse-ear cress) protein is Aldehyde oxidase GLOX1.